We begin with the raw amino-acid sequence, 439 residues long: Protein PHYTOCHROME KINASE SUBSTRATE 1 (439 aa).

Positions 1–14 (MVTLTPSSASTPKT) are enriched in polar residues. 3 disordered regions span residues 1–22 (MVTL…MKNN), 54–80 (KTLN…APED), and 100–139 (QGSS…SSWN). The segment covering 63 to 79 (KQEEFGDEKKMVKKAPE) has biased composition (basic and acidic residues). Polar residues-rich tracts occupy residues 100 to 109 (QGSSVLSLTN) and 118 to 139 (DSKQ…SSWN). S238 and S244 each carry phosphoserine. Disordered stretches follow at residues 259-311 (LPLP…PTCY) and 355-439 (TAKS…LYSQ). The span at 412-421 (TKPKSFETRR) shows a compositional bias: basic and acidic residues. The span at 424 to 439 (SNSSISHTQSSLLYSQ) shows a compositional bias: low complexity.

This sequence belongs to the PKS family. As to quaternary structure, interacts with PKS2, RPT3, PHOT1, PHOT2 and the C-termini of both phytochromes A (phyA) and B (phyB). Binds both spectral forms of phytochrome, Pr and Pfr. Post-translationally, phosphorylated on Ser and to a lower extent on Thr by phytochromes. Phosphorylation is stimulated twofold by red light. In terms of tissue distribution, expressed in young seedlings in both darkness and light. Moderate in leaves and very low in roots and flowers. Expressed in the elongation zone of the root and hypocotyl.

The protein resides in the cell membrane. In terms of biological role, may be responsible for light-regulated cytoplasmic sequestration of phytochromes or may be a negative regulator of phytochrome B signaling. Component of the network that modulates the very low-fluence response (VLFR) branch of phyA signaling. Acts positively in PHOT1 signaling. Regulates phytochrome-mediated photomorphogenesis and hypocotyl phototropism. Involved in the control of leaf flattening and leaf positioning. Promotes negative root phototropism and negatively regulates root gravitropism. May act by controlling auxin homeostasis. In Arabidopsis thaliana (Mouse-ear cress), this protein is Protein PHYTOCHROME KINASE SUBSTRATE 1 (PKS1).